A 208-amino-acid polypeptide reads, in one-letter code: MNRKNLQKQAEALSRLIKHFSKSEVESLIRLYHTLVGRPGDPNTRRGIDRNTFRNILHNTFGMTDDMIMDRVFRGFDKDNDSFISVTEWVEGLSVFLHGTLEEKIKYCFGVYDLNGDGYISREEMFHMLKNSLLKQPSEEDPDEGVKDLVEIALKKMDYDHDSKLSYTDFEKAVQEENLLLEAFGTCLPDSKCIMAFERQAFTEMNDI.

3 consecutive EF-hand domains span residues 64–99 (TDDM…FLHG), 100–135 (TLEE…SLLK), and 145–180 (GVKD…ENLL). Ca(2+) contacts are provided by D77, D79, D81, D113, N115, D117, Y119, E124, D158, D160, D162, K164, and D169.

As to quaternary structure, component of the outer dynein arm-docking complex along with ODAD1, ODAD2, ODAD3 and ODAD4.

It is found in the cytoplasm. It localises to the cytoskeleton. Its subcellular location is the cilium axoneme. The protein resides in the cell projection. The protein localises to the cilium. It is found in the flagellum. Functionally, component of the outer dynein arm-docking complex (ODA-DC) that mediates outer dynein arms (ODA) binding onto the doublet microtubule. Seems to regulate the assembly of both ODAs and their axonemal docking complex onto ciliary microtubules. Regulates ciliary and flagellar motility and is required for cilia-driven determination of body laterality. The polypeptide is Calaxin (clxn) (Xenopus laevis (African clawed frog)).